The sequence spans 376 residues: Chaperone protein DnaJ (376 aa).

Residues 5–72 form the J domain; it reads DFYEVLGVPK…QKRAAYDQYG (68 aa). The CR-type zinc-finger motif lies at 136–214; it reads GKEAQIRIPS…CHGQGRVKKQ (79 aa). Positions 149, 152, 166, 169, 188, 191, 202, and 205 each coordinate Zn(2+). CXXCXGXG motif repeat units lie at residues 149–156, 166–173, 188–195, and 202–209; these read CETCHGSG, CGTCQGSG, CPHCRGTG, and CTACHGQG. Disordered stretches follow at residues 227–246 and 354–376; these read DGMR…GGPP and KKGG…SFFS. Residues 237-246 are compositionally biased toward gly residues; that stretch reads GEPGTNGGPP. Residues 367–376 are compositionally biased toward basic and acidic residues; it reads WTDRLKSFFS.

The protein belongs to the DnaJ family. Homodimer. The cofactor is Zn(2+).

It localises to the cytoplasm. Participates actively in the response to hyperosmotic and heat shock by preventing the aggregation of stress-denatured proteins and by disaggregating proteins, also in an autonomous, DnaK-independent fashion. Unfolded proteins bind initially to DnaJ; upon interaction with the DnaJ-bound protein, DnaK hydrolyzes its bound ATP, resulting in the formation of a stable complex. GrpE releases ADP from DnaK; ATP binding to DnaK triggers the release of the substrate protein, thus completing the reaction cycle. Several rounds of ATP-dependent interactions between DnaJ, DnaK and GrpE are required for fully efficient folding. Also involved, together with DnaK and GrpE, in the DNA replication of plasmids through activation of initiation proteins. This chain is Chaperone protein DnaJ, found in Acidovorax ebreus (strain TPSY) (Diaphorobacter sp. (strain TPSY)).